Consider the following 997-residue polypeptide: Chromosomal passenger complex protein bir1 (997 aa).

BIR repeat units lie at residues 25–99 (RLDT…PWAY) and 120–194 (REQT…VFFT). Positions 163, 166, 183, and 190 each coordinate Zn(2+). Disordered stretches follow at residues 217-329 (EDLT…FSKG), 370-527 (TVSD…ENDE), 682-701 (TRDV…NHEE), 755-782 (SPKL…EKEA), and 817-838 (RTSV…ETKV). Over residues 240–252 (TLNFSPSRKNNLN) the composition is skewed to polar residues. The span at 288-299 (PRRKNKSPKKSK) shows a compositional bias: basic residues. A compositionally biased stretch (acidic residues) spans 311-320 (SDEDEDDDDL). The segment covering 370–392 (TVSDITGHQSVTDESDEQNNCMS) has biased composition (polar residues). The segment covering 408–423 (SVVSKSKEISSSVSSV) has biased composition (low complexity). Residues 426 to 451 (EQNHTEKQVAIETPEQQKVEKEDEHL) are compositionally biased toward basic and acidic residues. Polar residues-rich tracts occupy residues 463-476 (KQPI…SSPD) and 485-512 (RVSS…FSNI). Positions 756 to 772 (PKLQSKNNQTVEAVNTE) are enriched in polar residues. Residues 773 to 782 (TSDKLQEKEA) show a composition bias toward basic and acidic residues. Residues 817–830 (RTSVQNGTRSVSKN) show a composition bias toward polar residues.

As to quaternary structure, component of the CPC complex at least composed of ark1, bir1 and pic1. Interacts with the mitotic checkpoint complex (MCC) subunit mad3. Phosphorylated by ark1.

Its subcellular location is the nucleus. The protein resides in the cytoplasm. It localises to the cytoskeleton. The protein localises to the spindle. It is found in the chromosome. Its subcellular location is the centromere. In terms of biological role, component of the chromosomal passenger complex (CPC), a complex that acts as a key regulator of chromosome segregation and cytokinesis. Has a role in chromosome segregation by recruiting condensin and ark1 kinase to appropriate sites as the cell progresses through mitosis. Ark1 activity depends upon bir1 function and phosphorylation. Ark1 with bir1 function is required for full-scale association with kinetochores and formation of a complex with mad3. This chain is Chromosomal passenger complex protein bir1 (bir1), found in Schizosaccharomyces pombe (strain 972 / ATCC 24843) (Fission yeast).